A 206-amino-acid chain; its full sequence is 3-isopropylmalate dehydratase small subunit (206 aa).

This sequence belongs to the LeuD family. LeuD type 1 subfamily. In terms of assembly, heterodimer of LeuC and LeuD.

It carries out the reaction (2R,3S)-3-isopropylmalate = (2S)-2-isopropylmalate. It participates in amino-acid biosynthesis; L-leucine biosynthesis; L-leucine from 3-methyl-2-oxobutanoate: step 2/4. Catalyzes the isomerization between 2-isopropylmalate and 3-isopropylmalate, via the formation of 2-isopropylmaleate. The protein is 3-isopropylmalate dehydratase small subunit of Acidobacterium capsulatum (strain ATCC 51196 / DSM 11244 / BCRC 80197 / JCM 7670 / NBRC 15755 / NCIMB 13165 / 161).